We begin with the raw amino-acid sequence, 318 residues long: MALPIIVKWGGQEYSVTTLSEDDTVLDLKQFLKTLTGVLPERQKLLGLKVKGKPAENDVKLGALKLKPNTKIMMMGTREESLEDVLGPPPDNDDVVNDFDIEDEVVEVENREENLLKISRRVKEYKVEILNPPREGKKLLVLDVDYTLFDHRSCAETGVELMRPYLHEFLTSAYEDYDIVIWSATNMKWIEAKMKELGVSTNANYKITFMLDSAAMITVHTPRRGLIDVKPLGVIWGKFSEFYSKKNTIMFDDIGRNFLMNPQNGLKIRPFMKAHLNRDKDKGLLKLTQYLKEIAKLDDFLGLNHKYWERYLSKKQGQ.

The residue at position 2 (alanine 2) is an N-acetylalanine. The region spanning 3–81 is the Ubiquitin-like domain; it reads LPIIVKWGGQ…IMMMGTREES (79 aa). Position 117 is an N6-acetyllysine (lysine 117). Residues 133–294 enclose the FCP1 homology domain; sequence PREGKKLLVL…LKLTQYLKEI (162 aa). Positions 143, 145, and 253 each coordinate Mg(2+).

The cofactor is Mg(2+).

It is found in the nucleus. The catalysed reaction is O-phospho-L-seryl-[protein] + H2O = L-seryl-[protein] + phosphate. It catalyses the reaction O-phospho-L-threonyl-[protein] + H2O = L-threonyl-[protein] + phosphate. Functionally, dephosphorylates 26S nuclear proteasomes, thereby decreasing their proteolytic activity. Recruited to the 19S regulatory particle of the 26S proteasome through its interaction with 19S component PSMD2/RPN1. Once recruited, dephosphorylates 19S component PSMC2/RPT1 which impairs PSMC2 ATPase activity and disrupts 26S proteasome assembly. Has also been reported to stimulate the proteolytic activity of the 26S proteasome. In Pongo abelii (Sumatran orangutan), this protein is Ubiquitin-like domain-containing CTD phosphatase 1 (UBLCP1).